Here is a 470-residue protein sequence, read N- to C-terminus: Glutamate--tRNA ligase (470 aa).

The 'HIGH' region motif lies at 15 to 25 (PSPTGFLHIGG). The short motif at 240–244 (KLSKR) is the 'KMSKS' region element. Lysine 243 serves as a coordination point for ATP.

Belongs to the class-I aminoacyl-tRNA synthetase family. Glutamate--tRNA ligase type 1 subfamily. Monomer.

The protein resides in the cytoplasm. It catalyses the reaction tRNA(Glu) + L-glutamate + ATP = L-glutamyl-tRNA(Glu) + AMP + diphosphate. Catalyzes the attachment of glutamate to tRNA(Glu) in a two-step reaction: glutamate is first activated by ATP to form Glu-AMP and then transferred to the acceptor end of tRNA(Glu). The chain is Glutamate--tRNA ligase from Caulobacter vibrioides (strain ATCC 19089 / CIP 103742 / CB 15) (Caulobacter crescentus).